The primary structure comprises 198 residues: Probable host range protein 2 (198 aa).

Positions 171-198 (SDDDDDNDNADDDEEDDDEVNDIEDDYE) are disordered.

This sequence belongs to the poxviridae C7 protein family.

Plays a role for multiplication of the virus in different cell types. The chain is Probable host range protein 2 from Bos taurus (Bovine).